Consider the following 220-residue polypeptide: Ribonuclease HII (220 aa).

Positions 32–220 (KHIAGIDEAG…FAPIKGRFDC (189 aa)) constitute an RNase H type-2 domain. A divalent metal cation contacts are provided by Asp-38, Glu-39, and Asp-130.

It belongs to the RNase HII family. It depends on Mn(2+) as a cofactor. The cofactor is Mg(2+).

The protein resides in the cytoplasm. It catalyses the reaction Endonucleolytic cleavage to 5'-phosphomonoester.. Endonuclease that specifically degrades the RNA of RNA-DNA hybrids. In Brucella ovis (strain ATCC 25840 / 63/290 / NCTC 10512), this protein is Ribonuclease HII.